The primary structure comprises 291 residues: NAD kinase (291 aa).

Residue D73 is the Proton acceptor of the active site. NAD(+) is bound by residues 73-74 (DG), 147-148 (ND), R175, D177, 188-193 (TAYALS), A212, and Q246.

Belongs to the NAD kinase family. The cofactor is a divalent metal cation.

The protein resides in the cytoplasm. The catalysed reaction is NAD(+) + ATP = ADP + NADP(+) + H(+). Functionally, involved in the regulation of the intracellular balance of NAD and NADP, and is a key enzyme in the biosynthesis of NADP. Catalyzes specifically the phosphorylation on 2'-hydroxyl of the adenosine moiety of NAD to yield NADP. This is NAD kinase from Polaromonas sp. (strain JS666 / ATCC BAA-500).